Reading from the N-terminus, the 225-residue chain is Membrane-spanning 4-domains subfamily A member 4D (225 aa).

Residues 1-42 (MQGLAQTTMAVVPGGAPPSENSVIKSQMWNKNKEKFLKGEPK) are Cytoplasmic-facing. Residues 43-63 (VLGAIQVMIAFINFSLGIIII) traverse the membrane as a helical segment. Residues 64–73 (LNRVSERFMS) lie on the Extracellular side of the membrane. Residues 74-94 (VLLLAPFWGSIMFIFSGSLSI) form a helical membrane-spanning segment. Over 95 to 113 (AAGVKPTKAMIISSLSVNT) the chain is Cytoplasmic. Residues 114–134 (ISSVLAVAASIIGVISVISGV) form a helical membrane-spanning segment. Residues 135–148 (FRQFRSQPAIASLD) lie on the Extracellular side of the membrane. The chain crosses the membrane as a helical span at residues 149–169 (VLMTILNMLEFCIAVSVSAFG). At 170–225 (CKASCCNSSEVLVVLPSNSAVTVTAPPMILQPLPPSECQGKNVPENLYRNQPGEIV) the chain is on the cytoplasmic side.

Belongs to the MS4A family. Expressed in thymus, spleen, peripheral lymph node, liver, kidney, heart, colon, lung, and testes.

Its subcellular location is the membrane. Functionally, may be involved in signal transduction as a component of a multimeric receptor complex. The polypeptide is Membrane-spanning 4-domains subfamily A member 4D (Ms4a4d) (Mus musculus (Mouse)).